Here is a 214-residue protein sequence, read N- to C-terminus: MGVMGGTFDPIHYGHLVAASEVADLFDLDEVVFVPSGQPWQKGRQVSAAEHRYLMTVIATASNPRFSVSRVDIDRGGPTYTKDTLADLHALHPDSELYFTTGADALASIMSWQGWEELFELARFVGVSRPGYELRNEHITSLLGQLAKDALTLVEIPALAISSTDCRQRAEQSRPLWYLMPDSVVQYVSKCRLYCGACDAGARSTTSLAAGNGL.

This sequence belongs to the NadD family.

It catalyses the reaction nicotinate beta-D-ribonucleotide + ATP + H(+) = deamido-NAD(+) + diphosphate. It functions in the pathway cofactor biosynthesis; NAD(+) biosynthesis; deamido-NAD(+) from nicotinate D-ribonucleotide: step 1/1. Functionally, catalyzes the reversible adenylation of nicotinate mononucleotide (NaMN) to nicotinic acid adenine dinucleotide (NaAD). The protein is Probable nicotinate-nucleotide adenylyltransferase of Mycobacterium bovis (strain ATCC BAA-935 / AF2122/97).